We begin with the raw amino-acid sequence, 232 residues long: Ribose-5-phosphate isomerase A (232 aa).

Residues 31 to 34 (TGST), 87 to 90 (DGAD), and 100 to 103 (KGGG) each bind substrate. The Proton acceptor role is filled by Glu-109. A substrate-binding site is contributed by Lys-127.

It belongs to the ribose 5-phosphate isomerase family. In terms of assembly, homodimer.

The enzyme catalyses aldehydo-D-ribose 5-phosphate = D-ribulose 5-phosphate. The protein operates within carbohydrate degradation; pentose phosphate pathway; D-ribose 5-phosphate from D-ribulose 5-phosphate (non-oxidative stage): step 1/1. Functionally, catalyzes the reversible conversion of ribose-5-phosphate to ribulose 5-phosphate. This is Ribose-5-phosphate isomerase A from Bifidobacterium longum (strain NCC 2705).